Reading from the N-terminus, the 89-residue chain is Pyrin domain-containing protein 1 (89 aa).

Residues 1–89 form the Pyrin domain; that stretch reads MGTKREAILK…EEAARLQRAA (89 aa).

As to quaternary structure, interacts with PYCARD/ASC (via pyrin domain). In terms of processing, phosphorylated. In terms of tissue distribution, predominantly expressed in monocytes, macrophages and granulocytes.

It localises to the cytoplasm. In terms of biological role, associates with PYCARD/ASC and modulates its ability to collaborate with MEFV/pyrin and NLRP3/cryopyrin in NF-kappa-B and pro-caspase-1 activation. Suppresses kinase activity of NF-kappa-B inhibitor kinase (IKK) complex, expression of NF-kappa-B inducible genes and inhibits NF-kappa-B activation by cytokines and LPS. This Homo sapiens (Human) protein is Pyrin domain-containing protein 1.